Here is an 884-residue protein sequence, read N- to C-terminus: Probable disease resistance protein At1g12290 (884 aa).

Residues 26–66 (LYYIQNIKENLTSLEEAMEDLKALRDDLLRKVQTAEEGGLQ) adopt a coiled-coil conformation. An NB-ARC domain is found at 139 to 443 (AHPATRAVGE…CEGFIDGDEN (305 aa)). ATP is bound at residue 182-189 (GMGGVGKT). LRR repeat units follow at residues 519 to 540 (VVSR…PECP), 541 to 563 (KLTT…FFRS), 566 to 588 (RLVV…ISEL), 590 to 612 (SLRY…LKLK), 613 to 635 (KLMH…DHLS), and 644 to 664 (NLRM…ENLE).

Belongs to the disease resistance NB-LRR family.

Its function is as follows. Probable disease resistance protein. This chain is Probable disease resistance protein At1g12290, found in Arabidopsis thaliana (Mouse-ear cress).